The chain runs to 180 residues: ATP synthase subunit delta (180 aa).

It belongs to the ATPase delta chain family. In terms of assembly, F-type ATPases have 2 components, F(1) - the catalytic core - and F(0) - the membrane proton channel. F(1) has five subunits: alpha(3), beta(3), gamma(1), delta(1), epsilon(1). F(0) has three main subunits: a(1), b(2) and c(10-14). The alpha and beta chains form an alternating ring which encloses part of the gamma chain. F(1) is attached to F(0) by a central stalk formed by the gamma and epsilon chains, while a peripheral stalk is formed by the delta and b chains.

The protein localises to the cell inner membrane. F(1)F(0) ATP synthase produces ATP from ADP in the presence of a proton or sodium gradient. F-type ATPases consist of two structural domains, F(1) containing the extramembraneous catalytic core and F(0) containing the membrane proton channel, linked together by a central stalk and a peripheral stalk. During catalysis, ATP synthesis in the catalytic domain of F(1) is coupled via a rotary mechanism of the central stalk subunits to proton translocation. Functionally, this protein is part of the stalk that links CF(0) to CF(1). It either transmits conformational changes from CF(0) to CF(1) or is implicated in proton conduction. The sequence is that of ATP synthase subunit delta from Geobacter sp. (strain M21).